A 348-amino-acid polypeptide reads, in one-letter code: tRNA N6-adenosine threonylcarbamoyltransferase (348 aa).

His116 and His120 together coordinate Fe cation. Substrate is bound by residues 138–142, Asp171, Gly184, and Asn282; that span reads IISGG. Residue Asp310 coordinates Fe cation.

This sequence belongs to the KAE1 / TsaD family. Requires Fe(2+) as cofactor.

It is found in the cytoplasm. The enzyme catalyses L-threonylcarbamoyladenylate + adenosine(37) in tRNA = N(6)-L-threonylcarbamoyladenosine(37) in tRNA + AMP + H(+). Required for the formation of a threonylcarbamoyl group on adenosine at position 37 (t(6)A37) in tRNAs that read codons beginning with adenine. Is involved in the transfer of the threonylcarbamoyl moiety of threonylcarbamoyl-AMP (TC-AMP) to the N6 group of A37, together with TsaE and TsaB. TsaD likely plays a direct catalytic role in this reaction. The sequence is that of tRNA N6-adenosine threonylcarbamoyltransferase from Ehrlichia ruminantium (strain Gardel).